The sequence spans 54 residues: Ovomucoid (54 aa).

In terms of domain architecture, Kazal-like spans 4 to 54 (VDCSDYPKPACTVEYMPLCGSDNKTYDNKCNFCNAVVDSNGTLTLSHFGKC). 3 cysteine pairs are disulfide-bonded: cysteine 6–cysteine 36, cysteine 14–cysteine 33, and cysteine 22–cysteine 54. A glycan (N-linked (GlcNAc...) asparagine) is linked at asparagine 43.

Its subcellular location is the secreted. This Anser anser anser (Western greylag goose) protein is Ovomucoid.